The sequence spans 420 residues: Transcription factor TCP4 (420 aa).

The disordered stretch occupies residues 1 to 27 (MSDDQFHHPPPPSSMRHRSTSDAADGG). Positions 45–103 (RKDRHSKVCTAKGPRDRRVRLSAHTAIQFYDVQDRLGFDRPSKAVDWLIKKAKTSIDEL) constitute a TCP domain. 4 disordered regions span residues 121–176 (NAKP…PSMD), 228–256 (LSLQSFPDGPPSLLHHQHHHHTSASASEP), 353–379 (HQSISTDDLNHHHHLPPPVHQSAIPGI), and 399–420 (QEEEQHDGLTHKPSSASSISRH). Residues 410–420 (KPSSASSISRH) are compositionally biased toward polar residues.

In terms of assembly, interacts with AHL27 and AHL29. Interacts with SPL. Interacts with JGB. Interacts with GI (via N-terminus). In terms of tissue distribution, expressed in cotyledons, particularly in the vascular region, in leaves, roots, buds, flowers and immature siliques.

The protein resides in the nucleus. Functionally, transcription factor playing a pivotal role in the control of morphogenesis of shoot organs by negatively regulating the expression of boundary-specific genes such as CUC genes, probably through the induction of miRNA (e.g. miR164). Required during early steps of embryogenesis. Participates in ovule development. Activates LOX2 expression by binding to the 5'-GGACCA-3' motif found in its promoter. Activates YUC5 transcription by binding to the 5'-GTGGGCCA-3' motif found in its promoter. Through the activation of YUC5 transcription, integrates the auxin response to a brassinosteroid-dependent molecular circuit that promotes cell elongation in hypocotyls. Activates GIS transcription by binding to the 5'-TGGTCC-3' motif found in its promoter. Involved in the regulation of trichome branching through the activation of GIS transcription. Activates CO transcription by binding to the 5'-GGACCAC-3' motif found in its promoter. Involved in the regulation of photoperiodic flowering through the activation of CO transcription. Activates TCL1 and TCL2 transcription by binding to the 5'-TGGCCA-3' and 5'-GTGGACCA-3' motifS found in their respective promoters. Involved in the suppression of trichome initiaition through the activation of TCL1 and TCL2 transcription. Activates HAT2 transcription by binding to the 5'-TGGTCCAC-3' motif found in its promoter. Through the activation of HAT2 transcription, involved in the auxin-independent reprogramming of mitotic cells to exit division and acquire differentiation competence within the transition zone. The polypeptide is Transcription factor TCP4 (TCP4) (Arabidopsis thaliana (Mouse-ear cress)).